The primary structure comprises 313 residues: Ribosomal RNA small subunit methyltransferase H (313 aa).

S-adenosyl-L-methionine contacts are provided by residues G35–H37, D55, F81, D103, and Q110.

Belongs to the methyltransferase superfamily. RsmH family.

It localises to the cytoplasm. It catalyses the reaction cytidine(1402) in 16S rRNA + S-adenosyl-L-methionine = N(4)-methylcytidine(1402) in 16S rRNA + S-adenosyl-L-homocysteine + H(+). Functionally, specifically methylates the N4 position of cytidine in position 1402 (C1402) of 16S rRNA. The chain is Ribosomal RNA small subunit methyltransferase H from Azotobacter vinelandii (strain DJ / ATCC BAA-1303).